We begin with the raw amino-acid sequence, 500 residues long: Probable cytosol aminopeptidase (500 aa).

Mn(2+)-binding residues include Lys-265 and Asp-270. Residue Lys-277 is part of the active site. Mn(2+) is bound by residues Asp-288, Asp-347, and Glu-349. The active site involves Arg-351.

It belongs to the peptidase M17 family. Mn(2+) is required as a cofactor.

Its subcellular location is the cytoplasm. The catalysed reaction is Release of an N-terminal amino acid, Xaa-|-Yaa-, in which Xaa is preferably Leu, but may be other amino acids including Pro although not Arg or Lys, and Yaa may be Pro. Amino acid amides and methyl esters are also readily hydrolyzed, but rates on arylamides are exceedingly low.. The enzyme catalyses Release of an N-terminal amino acid, preferentially leucine, but not glutamic or aspartic acids.. Presumably involved in the processing and regular turnover of intracellular proteins. Catalyzes the removal of unsubstituted N-terminal amino acids from various peptides. The polypeptide is Probable cytosol aminopeptidase (Rickettsia rickettsii (strain Iowa)).